Consider the following 316-residue polypeptide: GPI-specific phospholipase A2-like PGAP3 (316 aa).

Residues 1-19 (MFLAAAAFLLSAPASASQG) form the signal peptide. Topologically, residues 20–97 (DKEPVYRDCV…GKWPFARFLC (78 aa)) are lumenal. The N-linked (GlcNAc...) asparagine glycan is linked to Asn-36. Residues 98–118 (FEEPASALASLLNGLACLLML) form a helical membrane-spanning segment. The Cytoplasmic segment spans residues 119 to 131 (LRYRSAVPCQSPM). Residues 132–152 (YHTITAFSLVSLNAWFWSTVF) traverse the membrane as a helical segment. Residues 153 to 165 (HTRDTYLTEKMDY) lie on the Lumenal side of the membrane. A helical membrane pass occupies residues 166 to 186 (FCASAVILYSIYLCCVRTLGL). The Cytoplasmic segment spans residues 187 to 194 (RRPAISSM). A helical membrane pass occupies residues 195–215 (VGVLLILAFTSHVSYLTFVSF). Residues 216-220 (DYGYN) are Lumenal-facing. The chain crosses the membrane as a helical span at residues 221–241 (MAANASIGIINLLWWLCWCWL). Residues 242-254 (NRRILPYWWRCGM) lie on the Cytoplasmic side of the membrane. A helical transmembrane segment spans residues 255–275 (VVLLLHGLALLELLDFPPLFW). The Lumenal portion of the chain corresponds to 276 to 278 (VLD). A helical membrane pass occupies residues 279-299 (AHAVWHLSTVPVHFLFYSFLI). Residues 300-316 (DDSLHLLNTEKPGVKLD) lie on the Cytoplasmic side of the membrane.

Belongs to the PGAP3 family.

Its subcellular location is the golgi apparatus membrane. Functionally, involved in the fatty acid remodeling steps of GPI-anchor maturation where the unsaturated acyl chain at sn-2 of inositol phosphate is replaced by a saturated stearoyl chain. May catalyze the first step of the fatty acid remodeling, by removing the unsaturated acyl chain at sn-2 of inositol phosphate, generating a lyso-GPI intermediate. The fatty acid remodeling steps is critical for the integration of GPI-APs into lipid rafts. The sequence is that of GPI-specific phospholipase A2-like PGAP3 from Danio rerio (Zebrafish).